Consider the following 83-residue polypeptide: MDLSSLLSQIPQDTLLVLLAYTVLGGLYLVVVPLALYAWMNQRWHRMGKLERLGIYGMVFFFFPGMILFAPFLNFRLSGQGDV.

Helical transmembrane passes span 15–35 (LLVLLAYTVLGGLYLVVVPLA) and 53–73 (LGIYGMVFFFFPGMILFAPFL).

Belongs to the complex I NdhL subunit family. NDH-1 can be composed of about 15 different subunits; different subcomplexes with different compositions have been identified which probably have different functions.

It is found in the cellular thylakoid membrane. The enzyme catalyses a plastoquinone + NADH + (n+1) H(+)(in) = a plastoquinol + NAD(+) + n H(+)(out). It carries out the reaction a plastoquinone + NADPH + (n+1) H(+)(in) = a plastoquinol + NADP(+) + n H(+)(out). In terms of biological role, NDH-1 shuttles electrons from an unknown electron donor, via FMN and iron-sulfur (Fe-S) centers, to quinones in the respiratory and/or the photosynthetic chain. The immediate electron acceptor for the enzyme in this species is believed to be plastoquinone. Couples the redox reaction to proton translocation, and thus conserves the redox energy in a proton gradient. Cyanobacterial NDH-1 also plays a role in inorganic carbon-concentration. The polypeptide is NAD(P)H-quinone oxidoreductase subunit L (Synechococcus sp. (strain CC9605)).